Here is a 408-residue protein sequence, read N- to C-terminus: Peptidase T (408 aa).

H79 serves as a coordination point for Zn(2+). The active site involves D81. Residue D139 participates in Zn(2+) binding. The active-site Proton acceptor is the E173. E174, D196, and H378 together coordinate Zn(2+).

This sequence belongs to the peptidase M20B family. Zn(2+) is required as a cofactor.

It localises to the cytoplasm. It catalyses the reaction Release of the N-terminal residue from a tripeptide.. Its function is as follows. Cleaves the N-terminal amino acid of tripeptides. The protein is Peptidase T of Shouchella clausii (strain KSM-K16) (Alkalihalobacillus clausii).